A 945-amino-acid polypeptide reads, in one-letter code: Valine--tRNA ligase (945 aa).

Residues 42–52 carry the 'HIGH' region motif; it reads PNVTGTLHMGH. The 'KMSKS' region signature appears at 552-556; that stretch reads KMSKS. Position 555 (Lys-555) interacts with ATP. A coiled-coil region spans residues 879-945; sequence DKAAETARLS…VQNQLAKLKD (67 aa).

The protein belongs to the class-I aminoacyl-tRNA synthetase family. ValS type 1 subfamily. Monomer.

It localises to the cytoplasm. The catalysed reaction is tRNA(Val) + L-valine + ATP = L-valyl-tRNA(Val) + AMP + diphosphate. Functionally, catalyzes the attachment of valine to tRNA(Val). As ValRS can inadvertently accommodate and process structurally similar amino acids such as threonine, to avoid such errors, it has a 'posttransfer' editing activity that hydrolyzes mischarged Thr-tRNA(Val) in a tRNA-dependent manner. The protein is Valine--tRNA ligase of Neisseria gonorrhoeae (strain ATCC 700825 / FA 1090).